The chain runs to 272 residues: Orotidine 5'-phosphate decarboxylase (272 aa).

Catalysis depends on Lys95, which acts as the Proton donor.

It belongs to the OMP decarboxylase family. Type 2 subfamily.

The enzyme catalyses orotidine 5'-phosphate + H(+) = UMP + CO2. It functions in the pathway pyrimidine metabolism; UMP biosynthesis via de novo pathway; UMP from orotate: step 2/2. The protein is Orotidine 5'-phosphate decarboxylase of Bordetella petrii (strain ATCC BAA-461 / DSM 12804 / CCUG 43448).